The following is a 196-amino-acid chain: Oocyte zinc finger protein XlCOF26 (196 aa).

C2H2-type zinc fingers lie at residues 6–28, 34–56, 62–84, 90–112, 118–140, 146–168, and 174–196; these read YSCT…QKNH, FTCT…QRIH, FTCT…HKIH, FTCP…QRTH, FTCT…QSTH, and FTCT…QMTH.

Belongs to the krueppel C2H2-type zinc-finger protein family.

The protein localises to the nucleus. Functionally, may be involved in transcriptional regulation. This Xenopus laevis (African clawed frog) protein is Oocyte zinc finger protein XlCOF26.